Here is a 111-residue protein sequence, read N- to C-terminus: Fluoride-specific ion channel FluC 3 (111 aa).

A run of 3 helical transmembrane segments spans residues 26-46 (IPAG…LLTF), 53-73 (VVYL…TFAY), and 91-111 (IFLN…ALML). Na(+)-binding residues include Gly63 and Thr66.

Belongs to the fluoride channel Fluc/FEX (TC 1.A.43) family.

It is found in the cell membrane. The catalysed reaction is fluoride(in) = fluoride(out). With respect to regulation, na(+) is not transported, but it plays an essential structural role and its presence is essential for fluoride channel function. In terms of biological role, fluoride-specific ion channel. Important for reducing fluoride concentration in the cell, thus reducing its toxicity. The polypeptide is Fluoride-specific ion channel FluC 3 (Methanosarcina acetivorans (strain ATCC 35395 / DSM 2834 / JCM 12185 / C2A)).